The chain runs to 554 residues: Kinesin-like protein 3 (554 aa).

Positions 3–325 (SIKVVCRIRP…LRFGHRAKSI (323 aa)) constitute a Kinesin motor domain. ATP contacts are provided by residues 84-91 (GQTGSGKT) and 233-240 (GSESVGKS). A coiled-coil region spans residues 446 to 473 (LSSTKQQLSDLMTALGDAQERYVELVKN).

The protein belongs to the TRAFAC class myosin-kinesin ATPase superfamily. Kinesin family.

The protein resides in the cytoplasm. The protein localises to the cytoskeleton. Functionally, cytoplasmic motor that could play a role in Golgi membrane recycling. In Schizosaccharomyces pombe (strain 972 / ATCC 24843) (Fission yeast), this protein is Kinesin-like protein 3 (klp3).